The chain runs to 471 residues: Putative multidrug resistance protein MdtD (471 aa).

Residues 1-11 (MTDLPDSTRWQ) are Periplasmic-facing. A helical membrane pass occupies residues 12 to 32 (LWIVAFGFFMQSLDTTIVNTA). Topologically, residues 33–48 (LPSMAQSLGESPLHMH) are cytoplasmic. The helical transmembrane segment at 49-69 (MVIVSYVLTVAVMLPASGWLA) threads the bilayer. The Periplasmic portion of the chain corresponds to 70–76 (DKVGVRN). A helical membrane pass occupies residues 77–97 (IFFTAIVLFTLGSLFCALSGT). Topologically, residues 98–101 (LNEL) are cytoplasmic. The chain crosses the membrane as a helical span at residues 102–124 (LLARALQGVGGAMMVPVGRLTVM). Residues 125–137 (KIVPREQYMAAMT) lie on the Periplasmic side of the membrane. The helical transmembrane segment at 138–158 (FVTLPGQVGPLLGPALGGLLV) threads the bilayer. Over 159-164 (EYASWH) the chain is Cytoplasmic. Residues 165-185 (WIFLINIPVGIIGAIATLMLM) form a helical membrane-spanning segment. Over 186 to 196 (PNYTMQTRRFD) the chain is Periplasmic. Residues 197–217 (LSGFLLLAVGMAVLTLALDGS) traverse the membrane as a helical segment. Over 218 to 224 (KGTGLSP) the chain is Cytoplasmic. A helical transmembrane segment spans residues 225–245 (LTIDGLVAVGVVALVLYLLHA). Over 246–262 (RNNNRALFSLKLFRTRT) the chain is Periplasmic. Residues 263-283 (FSLGLAGSFAGRIGSGMLPFM) form a helical membrane-spanning segment. Topologically, residues 284 to 285 (TP) are cytoplasmic. The helical transmembrane segment at 286–306 (VFLQIGLGFSPFHAGLMMIPM) threads the bilayer. Residues 307-341 (VLGSMGMKRIVVQVVNRFGYRRVLVATTLGLSLVT) lie on the Periplasmic side of the membrane. The chain crosses the membrane as a helical span at residues 342–362 (LLFMTTALLGWYYVLPFVLFL). At 363 to 395 (QGMVNSTRFSSMNTLTLKDLPDNLASSGNSLLS) the chain is on the cytoplasmic side. The chain crosses the membrane as a helical span at residues 396–416 (MIMQLSMSIGVTIAGLLLGLF). The Periplasmic segment spans residues 417–430 (GSQHVSIDSGTTQT). Residues 431-451 (VFMYTWLSMALIIALPAFIFA) form a helical membrane-spanning segment. The Cytoplasmic portion of the chain corresponds to 452–471 (RVPNDTHQNVAISRRKRSAQ).

Belongs to the major facilitator superfamily. TCR/Tet family.

The protein resides in the cell inner membrane. The polypeptide is Putative multidrug resistance protein MdtD (Escherichia coli (strain SE11)).